The chain runs to 209 residues: Uracil phosphoribosyltransferase (209 aa).

5-phospho-alpha-D-ribose 1-diphosphate is bound by residues R79, R104, and 131 to 139 (DPMLATGGT). Residues I194 and 199–201 (GDA) contribute to the uracil site. D200 lines the 5-phospho-alpha-D-ribose 1-diphosphate pocket.

The protein belongs to the UPRTase family. Requires Mg(2+) as cofactor.

The catalysed reaction is UMP + diphosphate = 5-phospho-alpha-D-ribose 1-diphosphate + uracil. It functions in the pathway pyrimidine metabolism; UMP biosynthesis via salvage pathway; UMP from uracil: step 1/1. With respect to regulation, allosterically activated by GTP. Catalyzes the conversion of uracil and 5-phospho-alpha-D-ribose 1-diphosphate (PRPP) to UMP and diphosphate. The polypeptide is Uracil phosphoribosyltransferase (Pseudoalteromonas translucida (strain TAC 125)).